The primary structure comprises 138 residues: Large ribosomal subunit protein uL16 (138 aa).

Over residues 1–17 the composition is skewed to basic residues; that stretch reads MLIPRKVKHRKQHHPRQ. Positions 1–24 are disordered; sequence MLIPRKVKHRKQHHPRQRGIASGG.

This sequence belongs to the universal ribosomal protein uL16 family. Part of the 50S ribosomal subunit.

Functionally, binds 23S rRNA and is also seen to make contacts with the A and possibly P site tRNAs. This is Large ribosomal subunit protein uL16 from Mycobacterium ulcerans (strain Agy99).